The following is a 107-amino-acid chain: U1-lycotoxin-Ls1n (107 aa).

An N-terminal signal peptide occupies residues 1–20 (MMKVLVVVALLVTLISYSSS). Residues 21–41 (EGIDDLEADELLSLMANEQTR) constitute a propeptide that is removed on maturation. Cystine bridges form between C44-C59, C51-C68, C58-C86, and C70-C84.

It belongs to the neurotoxin 19 (CSTX) family. 04 (U1-Lctx) subfamily. In terms of tissue distribution, expressed by the venom gland.

Its subcellular location is the secreted. The protein is U1-lycotoxin-Ls1n of Lycosa singoriensis (Wolf spider).